Reading from the N-terminus, the 205-residue chain is Holliday junction branch migration complex subunit RuvA (205 aa).

Positions 1–64 (MIGKLKGVID…EDQIKLFGFR (64 aa)) are domain I. The segment at 65 to 143 (TDHEREWFRL…SFANVDPTVV (79 aa)) is domain II. A flexible linker region spans residues 144 to 154 (HLAGDLDDQRA). The domain III stretch occupies residues 154–205 (APRPVRDAISALVNLGYGQPQATAAIAAASRGAGENAETAQLIRLGLKELSK).

Belongs to the RuvA family. Homotetramer. Forms an RuvA(8)-RuvB(12)-Holliday junction (HJ) complex. HJ DNA is sandwiched between 2 RuvA tetramers; dsDNA enters through RuvA and exits via RuvB. An RuvB hexamer assembles on each DNA strand where it exits the tetramer. Each RuvB hexamer is contacted by two RuvA subunits (via domain III) on 2 adjacent RuvB subunits; this complex drives branch migration. In the full resolvosome a probable DNA-RuvA(4)-RuvB(12)-RuvC(2) complex forms which resolves the HJ.

It localises to the cytoplasm. In terms of biological role, the RuvA-RuvB-RuvC complex processes Holliday junction (HJ) DNA during genetic recombination and DNA repair, while the RuvA-RuvB complex plays an important role in the rescue of blocked DNA replication forks via replication fork reversal (RFR). RuvA specifically binds to HJ cruciform DNA, conferring on it an open structure. The RuvB hexamer acts as an ATP-dependent pump, pulling dsDNA into and through the RuvAB complex. HJ branch migration allows RuvC to scan DNA until it finds its consensus sequence, where it cleaves and resolves the cruciform DNA. In Nitrobacter winogradskyi (strain ATCC 25391 / DSM 10237 / CIP 104748 / NCIMB 11846 / Nb-255), this protein is Holliday junction branch migration complex subunit RuvA.